The sequence spans 528 residues: Abrin-a (528 aa).

Residue Gln1 is modified to Pyrrolidone carboxylic acid. The active site involves Glu164. Disulfide bonds link Cys247/Cys269, Cys286/Cys305, and Cys329/Cys346. Positions Tyr273–Gly400 constitute a Ricin B-type lectin 1 domain. A 1-alpha repeat occupies Asp283–Ser325. A 1-beta repeat occupies Asn326 to Asn366. N-linked (GlcNAc...) asparagine glycans are attached at residues Asn361 and Asn401. One copy of the 1-gamma repeat lies at Ser369–Asn401. The region spanning Thr403–Leu527 is the Ricin B-type lectin 2 domain. Residues Ser414–Ser449 form a 2-alpha repeat. 2 cysteine pairs are disulfide-bonded: Cys417–Cys430 and Cys456–Cys473. The 2-beta repeat unit spans residues Thr453–Ser492. One copy of the 2-gamma repeat lies at Asp495–Phe528.

The protein in the N-terminal section; belongs to the ribosome-inactivating protein family. Type 2 RIP subfamily. As to quaternary structure, disulfide-linked dimer of A and B chains.

The catalysed reaction is Endohydrolysis of the N-glycosidic bond at one specific adenosine on the 28S rRNA.. In terms of biological role, the A chain is responsible for inhibiting protein synthesis through the catalytic inactivation of 60S ribosomal subunits by removing adenine from position 4,324 of 28S rRNA. Abrin-a is more toxic than ricin. The B chain is a galactose-specific lectin that facilitates the binding of abrin to the cell membrane that precedes endocytosis. The chain is Abrin-a from Abrus precatorius (Indian licorice).